The primary structure comprises 82 residues: MGSFSIWHWLIVLLIVVMVFGTKKLKNIGSDLGGAVKGFKDGMKDGASTDDSATTSAPAGQVTNNSTAADKTTIDVEAKHKS.

The chain crosses the membrane as a helical span at residues 1–21 (MGSFSIWHWLIVLLIVVMVFG). A disordered region spans residues 46-82 (GASTDDSATTSAPAGQVTNNSTAADKTTIDVEAKHKS). The span at 49–70 (TDDSATTSAPAGQVTNNSTAAD) shows a compositional bias: polar residues. Over residues 72–82 (TTIDVEAKHKS) the composition is skewed to basic and acidic residues.

It belongs to the TatA/E family. In terms of assembly, the Tat system comprises two distinct complexes: a TatABC complex, containing multiple copies of TatA, TatB and TatC subunits, and a separate TatA complex, containing only TatA subunits. Substrates initially bind to the TatABC complex, which probably triggers association of the separate TatA complex to form the active translocon.

It is found in the cell inner membrane. In terms of biological role, part of the twin-arginine translocation (Tat) system that transports large folded proteins containing a characteristic twin-arginine motif in their signal peptide across membranes. TatA could form the protein-conducting channel of the Tat system. The protein is Sec-independent protein translocase protein TatA of Acidovorax sp. (strain JS42).